The sequence spans 338 residues: Glyceraldehyde-3-phosphate dehydrogenase (338 aa).

NAD(+)-binding positions include 11–12 (TI) and glycine 109. Residue 138–140 (SCN) coordinates D-glyceraldehyde 3-phosphate. Cysteine 139 serves as the catalytic Nucleophile. NAD(+) is bound at residue arginine 167. Residues threonine 169 and 192-193 (HA) each bind D-glyceraldehyde 3-phosphate. Glutamine 299 contacts NAD(+).

This sequence belongs to the glyceraldehyde-3-phosphate dehydrogenase family. In terms of assembly, homotetramer.

The protein localises to the cytoplasm. The enzyme catalyses D-glyceraldehyde 3-phosphate + phosphate + NADP(+) = (2R)-3-phospho-glyceroyl phosphate + NADPH + H(+). The catalysed reaction is D-glyceraldehyde 3-phosphate + phosphate + NAD(+) = (2R)-3-phospho-glyceroyl phosphate + NADH + H(+). The protein operates within carbohydrate degradation; glycolysis; pyruvate from D-glyceraldehyde 3-phosphate: step 1/5. The polypeptide is Glyceraldehyde-3-phosphate dehydrogenase (Thermoplasma volcanium (strain ATCC 51530 / DSM 4299 / JCM 9571 / NBRC 15438 / GSS1)).